Here is a 65-residue protein sequence, read N- to C-terminus: Protein translocase subunit SecE (65 aa).

A helical membrane pass occupies residues 44–64 (LVMAVVGLIAYIVQLTTSLII).

Belongs to the SecE/SEC61-gamma family. Component of the Sec protein translocase complex. Heterotrimer consisting of SecY (alpha), SecG (beta) and SecE (gamma) subunits. The heterotrimers can form oligomers, although 1 heterotrimer is thought to be able to translocate proteins. Interacts with the ribosome. May interact with SecDF, and other proteins may be involved.

Its subcellular location is the cell membrane. Functionally, essential subunit of the Sec protein translocation channel SecYEG. Clamps together the 2 halves of SecY. May contact the channel plug during translocation. The chain is Protein translocase subunit SecE from Sulfolobus acidocaldarius (strain ATCC 33909 / DSM 639 / JCM 8929 / NBRC 15157 / NCIMB 11770).